The sequence spans 482 residues: Rhamnulokinase (482 aa).

13–17 serves as a coordination point for ATP; it reads ASSGR. Substrate is bound by residues Gly83 and 232 to 234; that span reads HDT. Residue Asp233 is the Proton acceptor of the active site. Thr255 serves as a coordination point for ATP. Substrate is bound at residue Asn292. Asn300 serves as a coordination point for ATP. A disulfide bridge connects residues Cys349 and Cys366. Residue Gly398 coordinates ATP. Residues Cys409 and Cys413 are joined by a disulfide bond.

The protein belongs to the rhamnulokinase family. Mg(2+) serves as cofactor.

The catalysed reaction is L-rhamnulose + ATP = L-rhamnulose 1-phosphate + ADP + H(+). It functions in the pathway carbohydrate degradation; L-rhamnose degradation; glycerone phosphate from L-rhamnose: step 2/3. Functionally, involved in the catabolism of L-rhamnose (6-deoxy-L-mannose). Catalyzes the transfer of the gamma-phosphate group from ATP to the 1-hydroxyl group of L-rhamnulose to yield L-rhamnulose 1-phosphate. This is Rhamnulokinase from Mannheimia succiniciproducens (strain KCTC 0769BP / MBEL55E).